Consider the following 511-residue polypeptide: Coatomer subunit delta (511 aa).

Residues 168–177 are compositionally biased toward basic and acidic residues; sequence QARRDAERQG. Residues 168–188 are disordered; that stretch reads QARRDAERQGKKAPGFGGFGS. Position 223 is a phosphoserine (serine 223). N6-acetyllysine is present on residues lysine 233 and lysine 241. Serine 244 is subject to Phosphoserine. The MHD domain maps to 271 to 511; that stretch reads MESVHMKIEE…TFLVDKYEIL (241 aa). Residues lysine 309 and lysine 351 each carry the N6-acetyllysine modification. Phosphoserine is present on serine 493.

Belongs to the adaptor complexes medium subunit family. Delta-COP subfamily. As to quaternary structure, oligomeric complex that consists of at least the alpha, beta, beta', gamma, delta, epsilon and zeta subunits.

The protein localises to the cytoplasm. Its subcellular location is the golgi apparatus membrane. It is found in the cytoplasmic vesicle. The protein resides in the COPI-coated vesicle membrane. Its function is as follows. The coatomer is a cytosolic protein complex that binds to dilysine motifs and reversibly associates with Golgi non-clathrin-coated vesicles, which further mediate biosynthetic protein transport from the ER, via the Golgi up to the trans Golgi network. Coatomer complex is required for budding from Golgi membranes, and is essential for the retrograde Golgi-to-ER transport of dilysine-tagged proteins. In mammals, the coatomer can only be recruited by membranes associated to ADP-ribosylation factors (ARFs), which are small GTP-binding proteins; the complex also influences the Golgi structural integrity, as well as the processing, activity, and endocytic recycling of LDL receptors. The polypeptide is Coatomer subunit delta (Arcn1) (Mus musculus (Mouse)).